Consider the following 223-residue polypeptide: V-type ATP synthase subunit D (223 aa).

Positions 203 to 223 are disordered; it reads AREAEEEGGRPNPQVEIGAGL.

The protein belongs to the V-ATPase D subunit family.

Its function is as follows. Produces ATP from ADP in the presence of a proton gradient across the membrane. The chain is V-type ATP synthase subunit D from Thermus thermophilus (strain ATCC BAA-163 / DSM 7039 / HB27).